Here is a 468-residue protein sequence, read N- to C-terminus: Probable Xaa-Pro aminopeptidase PEPP (468 aa).

Residues D264, D275, E398, and E438 each coordinate Mn(2+).

It belongs to the peptidase M24B family. The cofactor is Mn(2+).

It catalyses the reaction Release of any N-terminal amino acid, including proline, that is linked to proline, even from a dipeptide or tripeptide.. In terms of biological role, catalyzes the removal of a penultimate prolyl residue from the N-termini of peptides. The sequence is that of Probable Xaa-Pro aminopeptidase PEPP (PEPP) from Paracoccidioides lutzii (strain ATCC MYA-826 / Pb01) (Paracoccidioides brasiliensis).